The sequence spans 86 residues: Weak neurotoxin 8 (86 aa).

An N-terminal signal peptide occupies residues methionine 1–threonine 21. 5 disulfide bridges follow: cysteine 24–cysteine 45, cysteine 27–cysteine 32, cysteine 38–cysteine 63, cysteine 67–cysteine 78, and cysteine 79–cysteine 84.

The protein belongs to the three-finger toxin family. Ancestral subfamily. Orphan group II sub-subfamily. As to expression, expressed by the venom gland.

Its subcellular location is the secreted. In terms of biological role, binds with low affinity to muscular (alpha-1-beta-1-delta-epsilon/CHRNA1-CHRNB1-CHRND-CHRNE) and very low affinity to neuronal (alpha-7/CHRNA7) nicotinic acetylcholine receptor (nAChR). The sequence is that of Weak neurotoxin 8 from Naja sputatrix (Malayan spitting cobra).